A 191-amino-acid chain; its full sequence is Small ribosomal subunit protein uS5 (191 aa).

The S5 DRBM domain occupies 21-84 (LVDKLVTINR…ERAKRTMIRV (64 aa)). A disordered region spans residues 161 to 191 (PRHVASRRGKKAAELFGKREQGQTEAEVTNG). Basic and acidic residues predominate over residues 171 to 182 (KAAELFGKREQG).

Belongs to the universal ribosomal protein uS5 family. Part of the 30S ribosomal subunit. Contacts proteins S4 and S8.

Its function is as follows. With S4 and S12 plays an important role in translational accuracy. Located at the back of the 30S subunit body where it stabilizes the conformation of the head with respect to the body. This Gluconobacter oxydans (strain 621H) (Gluconobacter suboxydans) protein is Small ribosomal subunit protein uS5.